Here is a 163-residue protein sequence, read N- to C-terminus: Protein GOLVEN 3 (163 aa).

Positions 1–20 (MMRFTIIVIAFLLIIQSLEE) are cleaved as a signal peptide. Positions 21-141 (EHILVYAHEG…MEKLARLLRD (121 aa)) are excised as a propeptide. Tyr-143 carries the post-translational modification Sulfotyrosine. The disordered stretch occupies residues 144–163 (PIYSKPRRKPPVNNRAPDKF). Position 154 is a hydroxyproline (Pro-154). Residues 158 to 163 (RAPDKF) constitute a propeptide that is removed on maturation.

It belongs to the RGF family. As to quaternary structure, binds to LRR receptor-like serine/threonine-protein kinases RGI1, RGI2 and RGI3 to trigger their dimerization with SERK proteins and subsequent signaling. In terms of tissue distribution, expressed in roots, specifically in the root apical meristem (RAM).

The protein resides in the secreted. Its function is as follows. Signaling peptide (root growth factor) required during root gravitropism in a PIN2-traffic dependent manner, thus influencing the formation of auxin gradients. Maintains the postembryonic root stem cell niche. The chain is Protein GOLVEN 3 from Arabidopsis thaliana (Mouse-ear cress).